The following is a 239-amino-acid chain: Small ribosomal subunit protein uS3 (239 aa).

One can recognise a KH type-2 domain in the interval I39–R107. The segment at A214–A239 is disordered.

It belongs to the universal ribosomal protein uS3 family. In terms of assembly, part of the 30S ribosomal subunit. Forms a tight complex with proteins S10 and S14.

In terms of biological role, binds the lower part of the 30S subunit head. Binds mRNA in the 70S ribosome, positioning it for translation. The protein is Small ribosomal subunit protein uS3 of Methylocella silvestris (strain DSM 15510 / CIP 108128 / LMG 27833 / NCIMB 13906 / BL2).